Reading from the N-terminus, the 189-residue chain is Peptidyl-tRNA hydrolase (189 aa).

Residue Tyr-15 coordinates tRNA. Catalysis depends on His-20, which acts as the Proton acceptor. 3 residues coordinate tRNA: Phe-66, Asn-68, and Asn-114.

It belongs to the PTH family. As to quaternary structure, monomer.

The protein localises to the cytoplasm. It carries out the reaction an N-acyl-L-alpha-aminoacyl-tRNA + H2O = an N-acyl-L-amino acid + a tRNA + H(+). In terms of biological role, hydrolyzes ribosome-free peptidyl-tRNAs (with 1 or more amino acids incorporated), which drop off the ribosome during protein synthesis, or as a result of ribosome stalling. Functionally, catalyzes the release of premature peptidyl moieties from peptidyl-tRNA molecules trapped in stalled 50S ribosomal subunits, and thus maintains levels of free tRNAs and 50S ribosomes. The sequence is that of Peptidyl-tRNA hydrolase from Streptococcus pneumoniae serotype 2 (strain D39 / NCTC 7466).